Reading from the N-terminus, the 176-residue chain is Tubulin polymerization-promoting protein family member 3 (176 aa).

Ala-2 bears the N-acetylalanine mark.

This sequence belongs to the TPPP family.

Its subcellular location is the cytoplasm. It localises to the cytoskeleton. Functionally, regulator of microtubule dynamic that has microtubule bundling activity. Required for embryo implantation; possibly by regulating beta-catenin. Also required for decidualization via regulation of beta-catenin. This Rattus norvegicus (Rat) protein is Tubulin polymerization-promoting protein family member 3 (Tppp3).